The following is a 306-amino-acid chain: UDP-3-O-acyl-N-acetylglucosamine deacetylase (306 aa).

His-79, His-238, and Asp-242 together coordinate Zn(2+). The active-site Proton donor is His-265.

Belongs to the LpxC family. The cofactor is Zn(2+).

It carries out the reaction a UDP-3-O-[(3R)-3-hydroxyacyl]-N-acetyl-alpha-D-glucosamine + H2O = a UDP-3-O-[(3R)-3-hydroxyacyl]-alpha-D-glucosamine + acetate. The protein operates within glycolipid biosynthesis; lipid IV(A) biosynthesis; lipid IV(A) from (3R)-3-hydroxytetradecanoyl-[acyl-carrier-protein] and UDP-N-acetyl-alpha-D-glucosamine: step 2/6. In terms of biological role, catalyzes the hydrolysis of UDP-3-O-myristoyl-N-acetylglucosamine to form UDP-3-O-myristoylglucosamine and acetate, the committed step in lipid A biosynthesis. This is UDP-3-O-acyl-N-acetylglucosamine deacetylase from Shewanella violacea (strain JCM 10179 / CIP 106290 / LMG 19151 / DSS12).